We begin with the raw amino-acid sequence, 563 residues long: O-fucosyltransferase 14 (563 aa).

The span at methionine 1–serine 16 shows a compositional bias: low complexity. The segment at methionine 1–asparagine 25 is disordered. A helical; Signal-anchor for type II membrane protein membrane pass occupies residues isoleucine 73 to tyrosine 93. Asparagine 135, asparagine 140, and asparagine 339 each carry an N-linked (GlcNAc...) asparagine glycan. Residues histidine 412–arginine 414 and threonine 528–phenylalanine 529 each bind substrate.

This sequence belongs to the glycosyltransferase GT106 family.

It is found in the membrane. The protein operates within glycan metabolism. This is O-fucosyltransferase 14 from Arabidopsis thaliana (Mouse-ear cress).